The primary structure comprises 450 residues: UDP-N-acetylmuramoylalanine--D-glutamate ligase (450 aa).

119 to 125 (GSNGKTT) provides a ligand contact to ATP.

Belongs to the MurCDEF family.

It is found in the cytoplasm. The enzyme catalyses UDP-N-acetyl-alpha-D-muramoyl-L-alanine + D-glutamate + ATP = UDP-N-acetyl-alpha-D-muramoyl-L-alanyl-D-glutamate + ADP + phosphate + H(+). It functions in the pathway cell wall biogenesis; peptidoglycan biosynthesis. Functionally, cell wall formation. Catalyzes the addition of glutamate to the nucleotide precursor UDP-N-acetylmuramoyl-L-alanine (UMA). This is UDP-N-acetylmuramoylalanine--D-glutamate ligase from Bacillus mycoides (strain KBAB4) (Bacillus weihenstephanensis).